The chain runs to 387 residues: BarH-like 2 homeobox protein (387 aa).

Disordered stretches follow at residues 1–145 (MTME…FLIK), 157–240 (CAPY…TAFS), and 367–387 (PGGQPALNPLSSPIPGTPHPR). Polar residues predominate over residues 7–24 (SGSSFGIDTILSSASSGS). Positions 100–113 (APTQSLQPLPQQQQ) are enriched in low complexity. The span at 114-126 (PLPPQQPPPPPPQ) shows a compositional bias: pro residues. Residues 127-141 (QLGSAASAPRTSTSS) are compositionally biased toward low complexity. Polar residues predominate over residues 160–178 (YSTSVSSPHHTPKQESNAV). Positions 180 to 220 (ESFRPKLEQEDSKTKLDKREDSQSDIKCHGTKEEGDREITS) are enriched in basic and acidic residues. Residues 232–291 (PRKARTAFSDHQLNQLERSFERQKYLSVQDRMDLAAALNLTDTQVKTWYQNRRTKWKRQT) constitute a DNA-binding region (homeobox).

It belongs to the BAR homeobox family.

The protein resides in the nucleus. In terms of biological role, potential regulator of neural basic helix-loop-helix genes. The sequence is that of BarH-like 2 homeobox protein (BARHL2) from Homo sapiens (Human).